Reading from the N-terminus, the 264-residue chain is Splicing factor U2af 38 kDa subunit (264 aa).

A C3H1-type 1 zinc finger spans residues 12 to 40 (EKDKVNCSFYFKIGACRHGDRCSRIHNKP). Ser19 carries the post-translational modification Phosphoserine. One can recognise an RRM domain in the interval 44-149 (QTVLLQNLYV…RPVYSELSPV (106 aa)). Residues 151–178 (DFREACCRQYEMGECTRSGFCNFMHLKP) form a C3H1-type 2 zinc finger. Residues 190 to 219 (RRRRARSRSRSPGRRRGSRSRSRSPGRRGG) show a composition bias toward basic residues. The segment at 190-264 (RRRRARSRSR…GGGGGGGGRY (75 aa)) is disordered. The span at 233–251 (NERDNMRGNDRGNDRDRRK) shows a compositional bias: basic and acidic residues. Over residues 253-264 (GGGGGGGGGGRY) the composition is skewed to gly residues.

This sequence belongs to the splicing factor SR family. As to quaternary structure, associates with a 65 kDa protein.

Its subcellular location is the nucleus. Necessary for the splicing of pre-mRNA. Binds to the polypyrimidine tract of introns early during spliceosome assembly. In Drosophila melanogaster (Fruit fly), this protein is Splicing factor U2af 38 kDa subunit (U2af38).